Reading from the N-terminus, the 431-residue chain is Serine--tRNA ligase (431 aa).

237-239 (TAE) lines the L-serine pocket. ATP is bound at residue 268 to 270 (RSE). E291 serves as a coordination point for L-serine. 355 to 358 (EISS) contacts ATP. Position 390 (S390) interacts with L-serine.

It belongs to the class-II aminoacyl-tRNA synthetase family. Type-1 seryl-tRNA synthetase subfamily. Homodimer. The tRNA molecule binds across the dimer.

The protein resides in the cytoplasm. The catalysed reaction is tRNA(Ser) + L-serine + ATP = L-seryl-tRNA(Ser) + AMP + diphosphate + H(+). It carries out the reaction tRNA(Sec) + L-serine + ATP = L-seryl-tRNA(Sec) + AMP + diphosphate + H(+). Its pathway is aminoacyl-tRNA biosynthesis; selenocysteinyl-tRNA(Sec) biosynthesis; L-seryl-tRNA(Sec) from L-serine and tRNA(Sec): step 1/1. Functionally, catalyzes the attachment of serine to tRNA(Ser). Is also able to aminoacylate tRNA(Sec) with serine, to form the misacylated tRNA L-seryl-tRNA(Sec), which will be further converted into selenocysteinyl-tRNA(Sec). This chain is Serine--tRNA ligase, found in Neisseria meningitidis serogroup B (strain ATCC BAA-335 / MC58).